A 170-amino-acid chain; its full sequence is MNKASVVFSGLLMAVSASAIAATSSEDTDISKQPLEKVAPYPKAEKGMSRQVIYLPKQEHEENFKVELLIGKTLEVDCNRHMIGGTLETKTLSGWGYDYLVVEKLSEPASTMMACPDNTKQQKFIAANLGDAAMQRYNSRLPIVVYAPKDVEVKYRVWKAEDTVSKAEQK.

A signal peptide spans 1–21; sequence MNKASVVFSGLLMAVSASAIA. A disulfide bridge links Cys-78 with Cys-115.

It belongs to the protease inhibitor I11 (ecotin) family. Homodimer.

Its subcellular location is the periplasm. Its function is as follows. General inhibitor of pancreatic serine proteases: inhibits chymotrypsin, trypsin, elastases, factor X, kallikrein as well as a variety of other proteases. This chain is Ecotin, found in Serratia proteamaculans (strain 568).